The primary structure comprises 336 residues: Opsin-1, short-wave-sensitive 1 (336 aa).

The Extracellular segment spans residues 1–29 (MDAWAVQFGNASKVSPFEGEQYHIAPKWA). Asparagine 10 is a glycosylation site (N-linked (GlcNAc...) asparagine). A helical membrane pass occupies residues 30–54 (FYLQAAFMGFVFIVGTPMNGIVLFV). At 55–66 (TMKYKKLRQPLN) the chain is on the cytoplasmic side. The chain crosses the membrane as a helical span at residues 67–91 (YILVNISLAGFIFDTFSVSQVFVCA). Topologically, residues 92–106 (ARGYYFLGYTLCAME) are extracellular. A disulfide bridge connects residues cysteine 103 and cysteine 180. Residues 107–126 (AAMGSIAGLVTGWSLAVLAF) traverse the membrane as a helical segment. Topologically, residues 127–145 (ERYVVICKPFGSFKFGQGQ) are cytoplasmic. A helical membrane pass occupies residues 146–169 (AVGAVVFTWIIGTACATPPFFGWS). The Extracellular segment spans residues 170–195 (RYIPEGLGTACGPDWYTKSEEYNSES). A helical membrane pass occupies residues 196–223 (YTYFLLITCFMMPMTIIIFSYSQLLGAL). Over 224–245 (RAVAAQQAESESTQKAEREVSR) the chain is Cytoplasmic. Residues 246–269 (MVVVMVGSFVLCYAPYAVTAMYFA) traverse the membrane as a helical segment. Residues 270–277 (NSDEPNKD) are Extracellular-facing. The helical transmembrane segment at 278 to 302 (YRLVAIPAFFSKSSCVYNPLIYAFM) threads the bilayer. Lysine 289 carries the post-translational modification N6-(retinylidene)lysine. Over 303 to 336 (NKQFNACIMETVFGKKIDESSEVSSKTETSSVSA) the chain is Cytoplasmic.

This sequence belongs to the G-protein coupled receptor 1 family. Opsin subfamily. In terms of processing, phosphorylated on some or all of the serine and threonine residues present in the C-terminal region. In terms of tissue distribution, retinal short single cones, outer and inner segments.

The protein resides in the membrane. Functionally, visual pigments are the light-absorbing molecules that mediate vision. They consist of an apoprotein, opsin, covalently linked to cis-retinal. The chain is Opsin-1, short-wave-sensitive 1 (opn1sw1) from Danio rerio (Zebrafish).